Reading from the N-terminus, the 109-residue chain is Mannose-specific lectin (109 aa).

The region spanning 1 to 109 is the Bulb-type lectin domain; it reads DNILYSSEVL…PPIWATGTGR (109 aa). Residues Cys29 and Cys52 are joined by a disulfide bond. The propeptide occupies 79–82; it reads TGTN.

In terms of assembly, homotrimer or homotetramer.

Its subcellular location is the secreted. Its function is as follows. Mannose-specific lectin. Shows agglutinating activity toward rabbit erythrocytes and mitogenic activity towards mouse lymphocytes. The chain is Mannose-specific lectin from Aloe arborescens (Kidachi aloe).